The sequence spans 417 residues: Serine hydroxymethyltransferase 1 (417 aa).

(6S)-5,6,7,8-tetrahydrofolate is bound by residues leucine 121 and 125-127; that span reads GHL. Lysine 230 carries the N6-(pyridoxal phosphate)lysine modification. 355–357 provides a ligand contact to (6S)-5,6,7,8-tetrahydrofolate; sequence SPF.

The protein belongs to the SHMT family. In terms of assembly, homodimer. Pyridoxal 5'-phosphate is required as a cofactor.

It is found in the cytoplasm. The enzyme catalyses (6R)-5,10-methylene-5,6,7,8-tetrahydrofolate + glycine + H2O = (6S)-5,6,7,8-tetrahydrofolate + L-serine. It functions in the pathway one-carbon metabolism; tetrahydrofolate interconversion. It participates in amino-acid biosynthesis; glycine biosynthesis; glycine from L-serine: step 1/1. Catalyzes the reversible interconversion of serine and glycine with tetrahydrofolate (THF) serving as the one-carbon carrier. This reaction serves as the major source of one-carbon groups required for the biosynthesis of purines, thymidylate, methionine, and other important biomolecules. Also exhibits THF-independent aldolase activity toward beta-hydroxyamino acids, producing glycine and aldehydes, via a retro-aldol mechanism. In Pseudomonas aeruginosa (strain ATCC 15692 / DSM 22644 / CIP 104116 / JCM 14847 / LMG 12228 / 1C / PRS 101 / PAO1), this protein is Serine hydroxymethyltransferase 1.